A 1013-amino-acid polypeptide reads, in one-letter code: MAEASERLYRVQYAKSGRASCKKCSESIPKDSLRMAIMVQSPMFDGKVPHWYHFSCFWKVGQSIRHPDVEVDGFSELRWDDQQKVKKTAEAGGVAGKGQDGSGGKAEKTLGDFAAEYAKSNRSMCKGCLEKIEKGQMRLSKKMVDPEKPQLGMIDRWYHPTCFVKKRDELGFRPEYSASQLKGFSLLSAEDKEALKKQLPAIKNEGKRKGDEVDGTDEVAKKKSRKETDKYSKLEKALKAQNELIWNIKDELKKACSTNDLKELLIFNQQQVPSGESAILDRVADGMAFGALLPCKECSGQLVFKSDAYYCTGDVTAWTKCMVKTQNPSRKEWVTPKEFREISYLKKLKVKKQDRIFPPESSAPITVHWPLSVTSAPTAVNSSAPADKPLSNMKILTLGKLSQNKDEAKAVIEKLGGKLTGSANKASLCISIKKEVEKMNKKMEEVKEANIRVVSEDFLQDVSASTKSLQDLLSAHSLSPWGAEVKAEPGEVVAPRGKSAAPSKKSKGCFKEEGVNKSEKRMKLTLKGGAAVDPDSGLEHSAHVLEKGGKVFSATLGLVDIVKGTNSYYKLQLLEDDKESRYWIFRSWGRLGTVIGSNKLEQMPSKEEAVEQFMKLYEEKTGNAWHSKNFTKYPKKFYPLEIDYGQDEEAVKKLTVKPGTKSKLPKPVQELVGMIFDVDSMKKALVEYEIDLQKMPLGKLSRRQIQAAYSILSEVQQPVSQGSSESQILDLSNRFYTLIPHDFGMKKPPLLNNADSVQAKVEMLDNLLDIEVAYSLLRGGSDDSSKDPIDVNYEKLKTDIKVVDRDSEEAEVIRKYVKNTHATTHNAYDLEVIDIFKIEREGESQRYKPFRQLHNRRLLWHGSRTTNFAGILSQGLRIAPPEAPVTGYMFGKGIYFADMVSKSANYCHTSQGDPIGLIMLGEVALGNMYELKHASHISKLPKGKHSVKGLGKTTPDPSASITLEGVEVPLGTGIPSGVNDTALLYNEYIVYDIAQVNLKYLLKLKFNFKTSLW.

Residue Ala-2 is modified to N-acetylalanine. The PARP-type 1 zinc finger occupies 9–93 (YRVQYAKSGR…KVKKTAEAGG (85 aa)). Zn(2+)-binding residues include Cys-21 and Cys-24. Ser-41 bears the Phosphoserine mark. 2 residues coordinate Zn(2+): His-53 and Cys-56. Lys-97 and Lys-105 each carry N6-acetyllysine. The PARP-type 2 zinc finger occupies 113 to 203 (FAAEYAKSNR…ALKKQLPAIK (91 aa)). Residues Cys-125 and Cys-128 each coordinate Zn(2+). N6-acetyllysine is present on Lys-131. Residues His-159 and Cys-162 each coordinate Zn(2+). 3 positions are modified to phosphoserine: Ser-177, Ser-179, and Ser-185. Residue Lys-192 forms a Glycyl lysine isopeptide (Lys-Gly) (interchain with G-Cter in SUMO2) linkage. The tract at residues 200–226 (PAIKNEGKRKGDEVDGTDEVAKKKSRK) is disordered. Lys-203 is covalently cross-linked (Glycyl lysine isopeptide (Lys-Gly) (interchain with G-Cter in SUMO1); alternate). Lys-203 participates in a covalent cross-link: Glycyl lysine isopeptide (Lys-Gly) (interchain with G-Cter in SUMO2); alternate. Residues 204 to 226 (NEGKRKGDEVDGTDEVAKKKSRK) show a composition bias toward basic and acidic residues. 2 short sequence motifs (nuclear localization signal) span residues 207–209 (KRK) and 221–226 (KKKSRK). The 135-residue stretch at 225–359 (RKETDKYSKL…VKKQDRIFPP (135 aa)) folds into the PADR1 zinc-binding domain. Lys-249 is covalently cross-linked (Glycyl lysine isopeptide (Lys-Gly) (interchain with G-Cter in SUMO2)). 2 positions are modified to phosphoserine: Ser-274 and Ser-277. Residues 290-332 (GALLPCKECSGQLVFKSDAYYCTGDVTAWTKCMVKTQNPSRKE) are zinc ribbon. Zn(2+) is bound by residues Cys-295, Cys-298, Cys-311, and Cys-321. An automodification domain region spans residues 373–523 (VTSAPTAVNS…GVNKSEKRMK (151 aa)). The 92-residue stretch at 385–476 (PADKPLSNMK…KSLQDLLSAH (92 aa)) folds into the BRCT domain. Asp-387 is subject to PolyADP-ribosyl aspartic acid. 8 positions are modified to polyADP-ribosyl glutamic acid: Glu-407, Glu-413, Glu-435, Glu-437, Glu-444, Glu-445, Glu-448, and Glu-456. Residue Lys-467 forms a Glycyl lysine isopeptide (Lys-Gly) (interchain with G-Cter in SUMO2) linkage. Glu-484 is modified (polyADP-ribosyl glutamic acid). A Glycyl lysine isopeptide (Lys-Gly) (interchain with G-Cter in SUMO1); alternate cross-link involves residue Lys-486. Lys-486 participates in a covalent cross-link: Glycyl lysine isopeptide (Lys-Gly) (interchain with G-Cter in SUMO2); alternate. PolyADP-ribosyl glutamic acid is present on residues Glu-488 and Glu-491. Residues 489 to 508 (PGEVVAPRGKSAAPSKKSKG) are disordered. Positions 494 to 503 (APRGKSAAPS) are enriched in low complexity. ADP-ribosylserine occurs at positions 499, 503, and 506. Residue Lys-511 forms a Glycyl lysine isopeptide (Lys-Gly) (interchain with G-Cter in SUMO2) linkage. A polyADP-ribosyl glutamic acid mark is found at Glu-512 and Glu-513. Ser-518 carries the ADP-ribosylserine modification. Glu-519 is subject to PolyADP-ribosyl glutamic acid. Lys-520 carries the N6-(ADP-ribosyl)lysine modification. Lys-527 participates in a covalent cross-link: Glycyl lysine isopeptide (Lys-Gly) (interchain with G-Cter in SUMO2). Residues 541 to 637 (SAHVLEKGGK…KNFTKYPKKF (97 aa)) enclose the WGR domain. Thr-593 is modified (phosphothreonine). Lys-599 and Lys-620 each carry N6-acetyllysine. Residues 661 to 778 (KSKLPKPVQE…DIEVAYSLLR (118 aa)) form the PARP alpha-helical domain. Residue Lys-747 forms a Glycyl lysine isopeptide (Lys-Gly) (interchain with G-Cter in SUMO1); alternate linkage. Lys-747 is covalently cross-linked (Glycyl lysine isopeptide (Lys-Gly) (interchain with G-Cter in SUMO2); alternate). Ser-781 and Ser-785 each carry phosphoserine. In terms of domain architecture, PARP catalytic spans 787-1013 (DPIDVNYEKL…LKFNFKTSLW (227 aa)). Residues 861 to 863 (HGS), Gly-870, Arg-877, and Ser-903 each bind NAD(+). Residue Glu-987 is the For poly [ADP-ribose] polymerase activity of the active site.

Belongs to the ARTD/PARP family. Homodimer; PARP-type zinc-fingers from separate PARP1 molecules form a dimer module that specifically recognizes DNA strand breaks. Heterodimer; heterodimerizes with PARP2. Interacts (via the PARP catalytic domain) with HPF1. Interacts with NMNAT1. Interacts with nucleosomes; with a preference for nucleosomes containing H2A.X. Interacts with APTX. Component of a base excision repair (BER) complex, containing at least XRCC1, PARP1, PARP2, POLB and LRIG3. Interacts with SRY. The SWAP complex consists of NPM1, NCL, PARP1 and SWAP70. Interacts with TIAM2. Interacts with PARP3; leading to activate PARP1 in absence of DNA. Interacts (when poly-ADP-ribosylated) with CHD1L (via macro domain). Interacts with the DNA polymerase alpha catalytic subunit POLA1; this interaction functions as part of the control of replication fork progression. Interacts with EEF1A1 and TXK. Interacts with RNF4. Interacts with RNF146. Interacts with ZNF423. Interacts with APLF. Interacts with SNAI1 (via zinc fingers); the interaction requires SNAI1 to be poly-ADP-ribosylated and non-phosphorylated (active) by GSK3B. Interacts (when poly-ADP-ribosylated) with PARP9. Interacts with NR4A3; activates PARP1 by improving acetylation of PARP1 and suppressing the interaction between PARP1 and SIRT1. Interacts (via catalytic domain) with PUM3; the interaction inhibits the poly-ADP-ribosylation activity of PARP1 and the degradation of PARP1 by CASP3 following genotoxic stress. Interacts with ZNF365. Interacts with RRP1B. Interacts with TIMELESS; the interaction is direct. Interacts with CGAS; leading to impede the formation of the PARP1-TIMELESS complex. Interacts with KHDC3L, the interaction is increased following the formation of DNA double-strand breaks. Interacts (when auto-poly-ADP-ribosylated) with XRCC1; leading to inhibit PARP1 ADP-ribosyltransferase activity. Interacts with SPINDOC; promoting PARP1 ADP-ribosyltransferase activity. Interacts with BANF1; leading to inhibit PARP1 ADP-ribosyltransferase activity in response to oxidative DNA damage. Interacts (when sumoylated and ubiquitinated) with VCP/p97; leading to its extraction from chromatin. Interacts with YARS1; promoting PARP1 ADP-ribosyltransferase activity. Interacts with PACMP micropeptide; Interacts with PACMP micropeptide; interaction. Interacts (when poly-ADP-ribosylated) with isoform 1 of MACROH2A1; MACROH2A1 specifically binds to poly-ADP-ribose chains and inhibits PARP1 activity, limiting the consumption of nuclear NAD(+). Interacts with CARM1; promoting recruitment to replication forks. Interacts with RECQL. Interacts with ZNF32; the interaction reshapes ZNF432 interacting proteins. Interacts with TPRN; TPRN interacts with a number of DNA damage response proteins, is recruited to sites of DNA damage and may play a role in DNA damage repair. In terms of assembly, interacts (when auto-poly-ADP-ribosylated) with AIFM1. In terms of processing, poly-ADP-ribosylated on serine, glutamate and aspartate residues by autocatalysis. Auto-ADP-ribosylation on serine takes place following interaction with HPF1. Auto poly-ADP-ribosylation on serine residues promotes its dissociation from chromatin. Poly-ADP-ribosylated by PARP2; poly-ADP-ribosylation mediates the recruitment of CHD1L to DNA damage sites. Mono-ADP-ribosylated at Lys-520 by SIRT6 in response to oxidative stress, promoting recruitment to double-strand breaks (DSBs) sites. S-nitrosylated, leading to inhibit transcription regulation activity. Post-translationally, phosphorylated at Thr-593 by PRKDC in response to DNA damage following virus infection, promoting its translocation to the cytosol. Phosphorylated by TXK. In terms of processing, proteolytically cleaved by caspase-3 (CASP3) and caspase-7 (CASP7) in response to apoptosis to generate the Poly [ADP-ribose] polymerase 1, processed N-terminus and Poly [ADP-ribose] polymerase 1, processed C-terminus forms. Sumoylated with SUMO1 or SUMO2 by PIAS4 following prolonged residence (trapping) to chromatin. Sumoylation promotes ubiquitination by RNF4 and removal from chromatin by VCP/p97. Post-translationally, ubiquitinated by RNF4 following sumoylation by PIAS4 in response to prolonged residence (trapping) to chromatin. Ubiquitination promotes removal from chromatin by VCP/p97. In terms of tissue distribution, widely expressed. Expression is correlated with proliferation, with higher levels occurring during early fetal development and organogenesis and in the highly proliferative cell compartments of adult. Expressed in B-cells that have been induced to switch to various Ig isotypes.

Its subcellular location is the chromosome. It localises to the nucleus. The protein resides in the nucleolus. The protein localises to the cytoplasm. It is found in the cytosol. It carries out the reaction NAD(+) + (ADP-D-ribosyl)n-acceptor = nicotinamide + (ADP-D-ribosyl)n+1-acceptor + H(+).. It catalyses the reaction L-seryl-[protein] + NAD(+) = O-(ADP-D-ribosyl)-L-seryl-[protein] + nicotinamide + H(+). The enzyme catalyses L-aspartyl-[protein] + NAD(+) = 4-O-(ADP-D-ribosyl)-L-aspartyl-[protein] + nicotinamide. The catalysed reaction is L-glutamyl-[protein] + NAD(+) = 5-O-(ADP-D-ribosyl)-L-glutamyl-[protein] + nicotinamide. It carries out the reaction L-tyrosyl-[protein] + NAD(+) = O-(ADP-D-ribosyl)-L-tyrosyl-[protein] + nicotinamide + H(+). It catalyses the reaction L-histidyl-[protein] + NAD(+) = N(tele)-(ADP-D-ribosyl)-L-histidyl-[protein] + nicotinamide + H(+). With respect to regulation, ADP-ribosyltransferase activity is regulated via an allosteric activation mechanism. In absence of activation signal, PARP1 is autoinhibited by the PARP alpha-helical domain (also named HD region), which prevents effective NAD(+)-binding. Activity is highly stimulated by signals, such as DNA strand breaks. Binding to damaged DNA unfolds the PARP alpha-helical domain, relieving autoinhibition. Poly-ADP-ribosyltransferase activity is tightly regulated and PARP1 is removed from damaged chromatin following initial poly-ADP-ribosylation of chromatin to avoid prolonged residence (trapping) that has cytotoxic consequences. A number of factors (VCP/p97) or post-translational modifications (auto-poly-ADP-ribosylation or ubiquitination) promote PARP1 removal from chromatin. Its function is as follows. Poly-ADP-ribosyltransferase that mediates poly-ADP-ribosylation of proteins and plays a key role in DNA repair. Mediates glutamate, aspartate, serine, histidine or tyrosine ADP-ribosylation of proteins: the ADP-D-ribosyl group of NAD(+) is transferred to the acceptor carboxyl group of target residues and further ADP-ribosyl groups are transferred to the 2'-position of the terminal adenosine moiety, building up a polymer with an average chain length of 20-30 units. Serine ADP-ribosylation of proteins constitutes the primary form of ADP-ribosylation of proteins in response to DNA damage. Specificity for the different amino acids is conferred by interacting factors, such as HPF1 and NMNAT1. Following interaction with HPF1, catalyzes serine ADP-ribosylation of target proteins; HPF1 confers serine specificity by completing the PARP1 active site. Also catalyzes tyrosine ADP-ribosylation of target proteins following interaction with HPF1. Following interaction with NMNAT1, catalyzes glutamate and aspartate ADP-ribosylation of target proteins; NMNAT1 confers glutamate and aspartate specificity. PARP1 initiates the repair of DNA breaks: recognizes and binds DNA breaks within chromatin and recruits HPF1, licensing serine ADP-ribosylation of target proteins, such as histones (H2BS6ADPr and H3S10ADPr), thereby promoting decompaction of chromatin and the recruitment of repair factors leading to the reparation of DNA strand breaks. HPF1 initiates serine ADP-ribosylation but restricts the polymerase activity of PARP1 in order to limit the length of poly-ADP-ribose chains. In addition to base excision repair (BER) pathway, also involved in double-strand breaks (DSBs) repair: together with TIMELESS, accumulates at DNA damage sites and promotes homologous recombination repair by mediating poly-ADP-ribosylation. Mediates the poly-ADP-ribosylation of a number of proteins, including itself, APLF, CHFR and NFAT5. In addition to proteins, also able to ADP-ribosylate DNA: catalyzes ADP-ribosylation of DNA strand break termini containing terminal phosphates and a 2'-OH group in single- and double-stranded DNA, respectively. Required for PARP9 and DTX3L recruitment to DNA damage sites. PARP1-dependent PARP9-DTX3L-mediated ubiquitination promotes the rapid and specific recruitment of 53BP1/TP53BP1, UIMC1/RAP80, and BRCA1 to DNA damage sites. PARP1-mediated DNA repair in neurons plays a role in sleep: senses DNA damage in neurons and promotes sleep, facilitating efficient DNA repair. In addition to DNA repair, also involved in other processes, such as transcription regulation, programmed cell death, membrane repair, adipogenesis and innate immunity. Acts as a repressor of transcription: binds to nucleosomes and modulates chromatin structure in a manner similar to histone H1, thereby altering RNA polymerase II. Acts both as a positive and negative regulator of transcription elongation, depending on the context. Acts as a positive regulator of transcription elongation by mediating poly-ADP-ribosylation of NELFE, preventing RNA-binding activity of NELFE and relieving transcription pausing. Acts as a negative regulator of transcription elongation in response to DNA damage by catalyzing poly-ADP-ribosylation of CCNT1, disrupting the phase separation activity of CCNT1 and subsequent activation of CDK9. Involved in replication fork progression following interaction with CARM1: mediates poly-ADP-ribosylation at replication forks, slowing fork progression. Poly-ADP-ribose chains generated by PARP1 also play a role in poly-ADP-ribose-dependent cell death, a process named parthanatos. Also acts as a negative regulator of the cGAS-STING pathway. Acts by mediating poly-ADP-ribosylation of CGAS: PARP1 translocates into the cytosol following phosphorylation by PRKDC and catalyzes poly-ADP-ribosylation and inactivation of CGAS. Acts as a negative regulator of adipogenesis: catalyzes poly-ADP-ribosylation of histone H2B on 'Glu-35' (H2BE35ADPr) following interaction with NMNAT1, inhibiting phosphorylation of H2B at 'Ser-36' (H2BS36ph), thereby blocking expression of pro-adipogenetic genes. Involved in the synthesis of ATP in the nucleus, together with NMNAT1, PARG and NUDT5. Nuclear ATP generation is required for extensive chromatin remodeling events that are energy-consuming. Functionally, promotes AIFM1-mediated apoptosis. This form, which translocates into the cytoplasm following cleavage by caspase-3 (CASP3) and caspase-7 (CASP7) in response to apoptosis, is auto-poly-ADP-ribosylated and serves as a poly-ADP-ribose carrier to induce AIFM1-mediated apoptosis. This cleavage form irreversibly binds to DNA breaks and interferes with DNA repair, promoting DNA damage-induced apoptosis. This chain is Poly [ADP-ribose] polymerase 1 (Parp1), found in Mus musculus (Mouse).